The sequence spans 420 residues: F-box/LRR-repeat protein At2g43260 (420 aa).

The F-box domain occupies 7-53; that stretch reads NPNSIDILPELLEEVLLRLPTKSILKCRIVSKQWRSLLESSRFAERH. 2 LRR repeats span residues 112 to 135 and 226 to 251; these read QDWIIVLNPSTSQLRRFPSGLNHN and VYRILALDLHKEEFHKVPVPPTQITV.

This chain is F-box/LRR-repeat protein At2g43260, found in Arabidopsis thaliana (Mouse-ear cress).